Consider the following 222-residue polypeptide: Putative thymidylate synthase (222 aa).

Cys139 is an active-site residue.

Belongs to the thymidylate synthase family. Archaeal-type ThyA subfamily. As to quaternary structure, monomer.

The protein resides in the cytoplasm. Its pathway is pyrimidine metabolism; dTTP biosynthesis. In terms of biological role, may catalyze the biosynthesis of dTMP using an unknown cosubstrate. This chain is Putative thymidylate synthase, found in Methanocaldococcus jannaschii (strain ATCC 43067 / DSM 2661 / JAL-1 / JCM 10045 / NBRC 100440) (Methanococcus jannaschii).